The sequence spans 689 residues: Protein-glutamine gamma-glutamyltransferase 2 (689 aa).

Active-site residues include C278, H336, and D359. The Ca(2+) site is built by N399, D401, E437, E447, and E452. Positions S427–R453 are disordered. Residues V431–H441 show a composition bias toward basic and acidic residues. Position 476-483 (R476–A483) interacts with GTP. E539 contacts Ca(2+). Residue R580–Y583 coordinates GTP.

The protein belongs to the transglutaminase superfamily. Transglutaminase family. In terms of assembly, monomer. Ca(2+) is required as a cofactor. In terms of tissue distribution, predominates in mature erythrocytes. Also found in kidney and cardiac muscle.

It localises to the cytoplasm. Its subcellular location is the cytosol. The protein resides in the nucleus. It is found in the chromosome. The protein localises to the secreted. It localises to the extracellular space. Its subcellular location is the extracellular matrix. The protein resides in the cell membrane. It is found in the mitochondrion. It carries out the reaction L-glutaminyl-[protein] + L-lysyl-[protein] = [protein]-L-lysyl-N(6)-5-L-glutamyl-[protein] + NH4(+). The enzyme catalyses L-glutaminyl-[protein] + serotonin = 5-serotonyl-L-glutamyl-[protein] + NH4(+). The catalysed reaction is L-glutaminyl-[protein] + dopamine = 5-dopaminyl-L-glutamyl-[protein] + NH4(+). It catalyses the reaction L-glutaminyl-[protein] + histamine = 5-histaminyl-L-glutamyl-[protein] + NH4(+). It carries out the reaction L-glutaminyl-[protein] + (R)-noradrenaline = 5-(R)-noradrenalinyl-L-glutamyl-[protein] + NH4(+). The enzyme catalyses L-glutaminyl-[protein] + H2O = L-glutamyl-[protein] + NH4(+). With respect to regulation, acyltransferase activity is regulated by the binding of GTP and Ca(2+): inactivated by GTP, which stabilizes its closed structure, thereby obstructing the accessibility of substrates to the active sites. In contrast, Ca(2+) acts as a cofactor by inducing conformational change to the active open form. In absence of Ca(2+), Mg(2+) may bind Ca(2+)-binding sites, promoting GTP-binding and subsequent inhibition of the acyltransferase activity. Calcium-dependent acyltransferase that catalyzes the formation of covalent bonds between peptide-bound glutamine and various primary amines, such as gamma-amino group of peptide-bound lysine, or mono- and polyamines, thereby producing cross-linked or aminated proteins, respectively. Involved in many biological processes, such as bone development, angiogenesis, wound healing, cellular differentiation, chromatin modification and apoptosis. Acts as a protein-glutamine gamma-glutamyltransferase by mediating the cross-linking of proteins: under physiological conditions, the protein cross-linking activity is inhibited by GTP; inhibition is relieved by Ca(2+) in response to various stresses. When secreted, catalyzes cross-linking of proteins of the extracellular matrix, resulting in the formation of scaffolds. Plays a key role during apoptosis, both by (1) promoting the cross-linking of cytoskeletal proteins resulting in condensation of the cytoplasm, and by (2) mediating cross-linking proteins of the extracellular matrix, resulting in the irreversible formation of scaffolds that stabilize the integrity of the dying cells before their clearance by phagocytosis, thereby preventing the leakage of harmful intracellular components. In addition to protein cross-linking, can use different monoamine substrates to catalyze a vast array of protein post-translational modifications: mediates aminylation of serotonin, dopamine, noradrenaline or histamine into glutamine residues of target proteins to generate protein serotonylation, dopaminylation, noradrenalinylation or histaminylation, respectively. Mediates protein serotonylation of small GTPases during activation and aggregation of platelets, leading to constitutive activation of these GTPases. Plays a key role in chromatin organization by mediating serotonylation and dopaminylation of histone H3. Catalyzes serotonylation of 'Gln-5' of histone H3 (H3Q5ser) during serotonergic neuron differentiation, thereby facilitating transcription. Acts as a mediator of neurotransmission-independent role of nuclear dopamine in ventral tegmental area (VTA) neurons: catalyzes dopaminylation of 'Gln-5' of histone H3 (H3Q5dop), thereby regulating relapse-related transcriptional plasticity in the reward system. Also acts as a protein deamidase by mediating the side chain deamidation of specific glutamine residues of proteins to glutamate. May also act as an isopeptidase cleaving the previously formed cross-links. Also able to participate in signaling pathways independently of its acyltransferase activity: acts as a signal transducer in alpha-1 adrenergic receptor-mediated stimulation of phospholipase C-delta (PLCD) activity and is required for coupling alpha-1 adrenergic agonists to the stimulation of phosphoinositide lipid metabolism. The protein is Protein-glutamine gamma-glutamyltransferase 2 of Gallus gallus (Chicken).